We begin with the raw amino-acid sequence, 236 residues long: Large ribosomal subunit protein uL3 (236 aa).

The interval 215–236 is disordered; sequence PAPEPAAPVAAAAAGTGEEASA. Low complexity predominate over residues 221-236; that stretch reads APVAAAAAGTGEEASA.

The protein belongs to the universal ribosomal protein uL3 family. As to quaternary structure, part of the 50S ribosomal subunit. Forms a cluster with proteins L14 and L19.

In terms of biological role, one of the primary rRNA binding proteins, it binds directly near the 3'-end of the 23S rRNA, where it nucleates assembly of the 50S subunit. The chain is Large ribosomal subunit protein uL3 from Parafrankia sp. (strain EAN1pec).